We begin with the raw amino-acid sequence, 59 residues long: Mu-conotoxin SrVA (59 aa).

The N-terminal stretch at 1–22 is a signal peptide; the sequence is MRCLPVFVILLLLIASAPSVDA. Residues 23-44 constitute a propeptide that is removed on maturation; the sequence is QLKTKDDVPLASFHDNAKGTQH. Cystine bridges form between Cys-51–Cys-58 and Cys-52–Cys-59.

The protein belongs to the conotoxin T superfamily. As to expression, expressed by the venom duct.

It localises to the secreted. Functionally, mu-conotoxins block voltage-gated sodium channels. This peptide inhibits the cardiac sodium channel hNav1.5/SCN5A (33% inhibition at 200 nM, 50% at 400 nM, and 55% at 600 nM). Does not interfere with the voltage-dependence of activation, but affects the voltage-dependence of inactivation of hNav1.5. In vivo, intracranial injection into 9-day-old mice causes transient symptoms, including extension of the body and clockwise and counter-clockwise turns, that last 3 to 4 minutes. Intracranial injection into 16-day-old mice, causes transient symptoms, including agitated breathing and occasional turning followed by scratching and grooming behavior, that last for 15-19 minutes. The chain is Mu-conotoxin SrVA from Conus spurius (Alphabet cone).